Here is a 445-residue protein sequence, read N- to C-terminus: N-succinylarginine dihydrolase (445 aa).

Substrate contacts are provided by residues 19 to 28 (AGLSFGNVAS), Asn110, and 137 to 138 (HR). Glu174 is a catalytic residue. Arg214 lines the substrate pocket. His250 is an active-site residue. Residues Asp252 and Asn363 each contribute to the substrate site. Cys369 acts as the Nucleophile in catalysis.

This sequence belongs to the succinylarginine dihydrolase family. Homodimer.

It carries out the reaction N(2)-succinyl-L-arginine + 2 H2O + 2 H(+) = N(2)-succinyl-L-ornithine + 2 NH4(+) + CO2. Its pathway is amino-acid degradation; L-arginine degradation via AST pathway; L-glutamate and succinate from L-arginine: step 2/5. Catalyzes the hydrolysis of N(2)-succinylarginine into N(2)-succinylornithine, ammonia and CO(2). The chain is N-succinylarginine dihydrolase from Shewanella piezotolerans (strain WP3 / JCM 13877).